A 261-amino-acid polypeptide reads, in one-letter code: Cytochrome c oxidase subunit 3 (261 aa).

The Mitochondrial matrix portion of the chain corresponds to 1-15 (MTHQTHAYHMVNPSP). The helical transmembrane segment at 16–34 (WPLTGALSALLMTSGLIMW) threads the bilayer. Residues 35–40 (FHFNST) lie on the Mitochondrial intermembrane side of the membrane. Residues 41–66 (TLLMLGLTTNMLTMYQWWRDVIREST) form a helical membrane-spanning segment. The Mitochondrial matrix portion of the chain corresponds to 67 to 72 (FQGHHT). Residues 73–105 (PNVQKGLRYGMILFIISEVLFFTGFFWAFYHSS) form a helical membrane-spanning segment. Over 106–128 (LAPTPELGGCWPPTGIHPLNPLE) the chain is Mitochondrial intermembrane. A helical membrane pass occupies residues 129–152 (VPLLNTSVLLASGVSITWAHHSLM). Topologically, residues 153–155 (EGN) are mitochondrial matrix. The chain crosses the membrane as a helical span at residues 156–183 (RNHMLQALFITIALGVYFTLLQASEYYE). The Mitochondrial intermembrane portion of the chain corresponds to 184–190 (APFTISD). The helical transmembrane segment at 191–223 (GVYGSTFFVATGFHGLHVIIGSTFLIVCFFRQL) threads the bilayer. The Mitochondrial matrix portion of the chain corresponds to 224–232 (KFHFTSNHH). The chain crosses the membrane as a helical span at residues 233–256 (FGFEAAAWYWHFVDVVWLFLYVSI). Over 257 to 261 (YWWGS) the chain is Mitochondrial intermembrane.

Belongs to the cytochrome c oxidase subunit 3 family. Component of the cytochrome c oxidase (complex IV, CIV), a multisubunit enzyme composed of 14 subunits. The complex is composed of a catalytic core of 3 subunits MT-CO1, MT-CO2 and MT-CO3, encoded in the mitochondrial DNA, and 11 supernumerary subunits COX4I, COX5A, COX5B, COX6A, COX6B, COX6C, COX7A, COX7B, COX7C, COX8 and NDUFA4, which are encoded in the nuclear genome. The complex exists as a monomer or a dimer and forms supercomplexes (SCs) in the inner mitochondrial membrane with NADH-ubiquinone oxidoreductase (complex I, CI) and ubiquinol-cytochrome c oxidoreductase (cytochrome b-c1 complex, complex III, CIII), resulting in different assemblies (supercomplex SCI(1)III(2)IV(1) and megacomplex MCI(2)III(2)IV(2)).

Its subcellular location is the mitochondrion inner membrane. It carries out the reaction 4 Fe(II)-[cytochrome c] + O2 + 8 H(+)(in) = 4 Fe(III)-[cytochrome c] + 2 H2O + 4 H(+)(out). Component of the cytochrome c oxidase, the last enzyme in the mitochondrial electron transport chain which drives oxidative phosphorylation. The respiratory chain contains 3 multisubunit complexes succinate dehydrogenase (complex II, CII), ubiquinol-cytochrome c oxidoreductase (cytochrome b-c1 complex, complex III, CIII) and cytochrome c oxidase (complex IV, CIV), that cooperate to transfer electrons derived from NADH and succinate to molecular oxygen, creating an electrochemical gradient over the inner membrane that drives transmembrane transport and the ATP synthase. Cytochrome c oxidase is the component of the respiratory chain that catalyzes the reduction of oxygen to water. Electrons originating from reduced cytochrome c in the intermembrane space (IMS) are transferred via the dinuclear copper A center (CU(A)) of subunit 2 and heme A of subunit 1 to the active site in subunit 1, a binuclear center (BNC) formed by heme A3 and copper B (CU(B)). The BNC reduces molecular oxygen to 2 water molecules using 4 electrons from cytochrome c in the IMS and 4 protons from the mitochondrial matrix. The protein is Cytochrome c oxidase subunit 3 (MT-CO3) of Antilope cervicapra (Blackbuck).